Here is a 199-residue protein sequence, read N- to C-terminus: MSLFSTSLWTTTVMSIIVGLYMLFHNSGESFDFGSFLLDTSPYTWGLLGIASCVAFGIIGAAWGIFICGTSILGGAVKAPRIKTKNLISIIFCEVVAIYSLIIAIVFSAKINDINPAGFYTKSHYYTGFALFWGGITVGLCNLICGVCVGITGSSAALADAQDASLFVKVLVVEIFGSVLGLFGLIVGLLIGGKASDFS.

The Vacuolar portion of the chain corresponds to 1–3; that stretch reads MSL. A helical membrane pass occupies residues 4–24; sequence FSTSLWTTTVMSIIVGLYMLF. Residues 25-46 are Cytoplasmic-facing; it reads HNSGESFDFGSFLLDTSPYTWG. The chain crosses the membrane as a helical span at residues 47–67; the sequence is LLGIASCVAFGIIGAAWGIFI. The Vacuolar segment spans residues 68–86; it reads CGTSILGGAVKAPRIKTKN. A helical membrane pass occupies residues 87 to 107; it reads LISIIFCEVVAIYSLIIAIVF. At 108 to 130 the chain is on the cytoplasmic side; sequence SAKINDINPAGFYTKSHYYTGFA. A helical membrane pass occupies residues 131–151; the sequence is LFWGGITVGLCNLICGVCVGI. At 152-170 the chain is on the vacuolar side; that stretch reads TGSSAALADAQDASLFVKV. The chain crosses the membrane as a helical span at residues 171–191; the sequence is LVVEIFGSVLGLFGLIVGLLI. Residues 192–199 are Cytoplasmic-facing; the sequence is GGKASDFS.

The protein belongs to the V-ATPase proteolipid subunit family. V-ATPase is a heteromultimeric enzyme composed of a peripheral catalytic V1 complex (components A to H) attached to an integral membrane V0 proton pore complex (components: a, c, c', c'', d, e, f and VOA1). The decameric c-ring forms the proton-conducting pore, and is composed of eight proteolipid subunits c, one subunit c' and one subunit c''.

Its subcellular location is the vacuole membrane. In terms of biological role, proton-conducting pore forming subunit of the V0 complex of vacuolar(H+)-ATPase (V-ATPase), a multisubunit enzyme composed of a peripheral complex (V1) that hydrolyzes ATP and a membrane integral complex (V0) that translocates protons. V-ATPase is responsible for acidifying and maintaining the pH of intracellular compartments. The sequence is that of Probable V-type proton ATPase 20 kDa proteolipid subunit (vma16) from Schizosaccharomyces pombe (strain 972 / ATCC 24843) (Fission yeast).